A 514-amino-acid polypeptide reads, in one-letter code: JmjC domain-containing histone demethylation protein 1 (514 aa).

The PHD-type zinc finger occupies 4–62; it reads IDTCPICVESPLEDSTTFNNIAWLQCDICNQWFHASCLKIPKIEVNNLHSYHCEGCSKS. The 165-residue stretch at 220–384 folds into the JmjC domain; it reads SDVDSFGKSF…MHLRIYEIEK (165 aa). Residue Thr-267 participates in substrate binding. 2 residues coordinate Fe cation: His-270 and Asp-272. Position 287 (Lys-287) interacts with substrate. His-352 provides a ligand contact to Fe cation. Residues 432–454 show a composition bias toward basic and acidic residues; sequence KSEAHSRGEVHTKTETHAVKDEP. Residues 432 to 456 form a disordered region; that stretch reads KSEAHSRGEVHTKTETHAVKDEPQP.

This sequence belongs to the JHDM1 histone demethylase family. Fe(2+) serves as cofactor.

Its subcellular location is the nucleus. It carries out the reaction N(6),N(6)-dimethyl-L-lysyl(36)-[histone H3] + 2 2-oxoglutarate + 2 O2 = L-lysyl(36)-[histone H3] + 2 formaldehyde + 2 succinate + 2 CO2. Histone demethylase that specifically demethylates 'Lys-36' of histone H3, thereby playing a central role in histone code. This is JmjC domain-containing histone demethylation protein 1 (JHD1) from Debaryomyces hansenii (strain ATCC 36239 / CBS 767 / BCRC 21394 / JCM 1990 / NBRC 0083 / IGC 2968) (Yeast).